Consider the following 259-residue polypeptide: Glutamate racemase (259 aa).

Residues 7-8 and 39-40 contribute to the substrate site; these read DS and YG. The active-site Proton donor/acceptor is Cys-70. Position 71–72 (71–72) interacts with substrate; the sequence is NS. Cys-180 functions as the Proton donor/acceptor in the catalytic mechanism. A substrate-binding site is contributed by 181 to 182; it reads TH.

This sequence belongs to the aspartate/glutamate racemases family.

It catalyses the reaction L-glutamate = D-glutamate. It participates in cell wall biogenesis; peptidoglycan biosynthesis. In terms of biological role, provides the (R)-glutamate required for cell wall biosynthesis. The sequence is that of Glutamate racemase from Hydrogenobaculum sp. (strain Y04AAS1).